Here is a 329-residue protein sequence, read N- to C-terminus: Vomeronasal type-1 receptor 42 (329 aa).

Residues M1–T32 lie on the Extracellular side of the membrane. The chain crosses the membrane as a helical span at residues F33–L53. Topologically, residues K54–D65 are cytoplasmic. A helical membrane pass occupies residues L66–A86. The Extracellular portion of the chain corresponds to T87 to R109. A disulfide bridge links C101 with C188. The helical transmembrane segment at V110 to L130 threads the bilayer. Over S131 to G150 the chain is Cytoplasmic. Residues A151–I171 form a helical membrane-spanning segment. Residues A172–E209 lie on the Extracellular side of the membrane. N-linked (GlcNAc...) asparagine glycosylation occurs at N175. The helical transmembrane segment at F210 to H230 threads the bilayer. The Cytoplasmic portion of the chain corresponds to R231–Q254. Residues T255 to C275 form a helical membrane-spanning segment. The Extracellular segment spans residues S276–T285. The chain crosses the membrane as a helical span at residues S286 to M306. Topologically, residues S307–H329 are cytoplasmic.

Belongs to the G-protein coupled receptor 1 family.

It localises to the cell membrane. Its function is as follows. Putative pheromone receptor implicated in the regulation of social and reproductive behavior. This Mus musculus (Mouse) protein is Vomeronasal type-1 receptor 42 (Vmn1r42).